Reading from the N-terminus, the 131-residue chain is D-ribose pyranase (131 aa).

His-20 functions as the Proton donor in the catalytic mechanism. Residues Asp-28, His-98, and 120-122 (YAN) each bind substrate.

This sequence belongs to the RbsD / FucU family. RbsD subfamily. In terms of assembly, homodecamer.

It localises to the cytoplasm. It carries out the reaction beta-D-ribopyranose = beta-D-ribofuranose. The protein operates within carbohydrate metabolism; D-ribose degradation; D-ribose 5-phosphate from beta-D-ribopyranose: step 1/2. In terms of biological role, catalyzes the interconversion of beta-pyran and beta-furan forms of D-ribose. This is D-ribose pyranase from Bacillus licheniformis (strain ATCC 14580 / DSM 13 / JCM 2505 / CCUG 7422 / NBRC 12200 / NCIMB 9375 / NCTC 10341 / NRRL NRS-1264 / Gibson 46).